The primary structure comprises 232 residues: LexA repressor (232 aa).

The span at 1 to 10 (MDDSNDSSSA) shows a compositional bias: polar residues. Residues 1–22 (MDDSNDSSSAGPDGRLHAVDPS) form a disordered region. The segment at residues 47-67 (IREIGDAVGLTSTSSVAHQLR) is a DNA-binding region (H-T-H motif). Residues serine 156 and lysine 193 each act as for autocatalytic cleavage activity in the active site.

Belongs to the peptidase S24 family. In terms of assembly, homodimer.

It catalyses the reaction Hydrolysis of Ala-|-Gly bond in repressor LexA.. Functionally, represses a number of genes involved in the response to DNA damage (SOS response), including recA and lexA. In the presence of single-stranded DNA, RecA interacts with LexA causing an autocatalytic cleavage which disrupts the DNA-binding part of LexA, leading to derepression of the SOS regulon and eventually DNA repair. The chain is LexA repressor from Mycolicibacterium paratuberculosis (strain ATCC BAA-968 / K-10) (Mycobacterium paratuberculosis).